A 47-amino-acid polypeptide reads, in one-letter code: uncharacterized protein (47 aa).

Positions 22-47 are disordered; that stretch reads VGPRTKRANQASPPVGRHSSRLMCPG.

This is an uncharacterized protein from Saccharomyces cerevisiae (strain ATCC 204508 / S288c) (Baker's yeast).